The primary structure comprises 292 residues: 1D-myo-inositol 2-acetamido-2-deoxy-alpha-D-glucopyranoside deacetylase (292 aa).

Positions 11, 14, and 146 each coordinate Zn(2+).

This sequence belongs to the MshB deacetylase family. Zn(2+) is required as a cofactor.

It catalyses the reaction 1D-myo-inositol 2-acetamido-2-deoxy-alpha-D-glucopyranoside + H2O = 1D-myo-inositol 2-amino-2-deoxy-alpha-D-glucopyranoside + acetate. Its function is as follows. Catalyzes the deacetylation of 1D-myo-inositol 2-acetamido-2-deoxy-alpha-D-glucopyranoside (GlcNAc-Ins) in the mycothiol biosynthesis pathway. The sequence is that of 1D-myo-inositol 2-acetamido-2-deoxy-alpha-D-glucopyranoside deacetylase from Acidothermus cellulolyticus (strain ATCC 43068 / DSM 8971 / 11B).